Consider the following 213-residue polypeptide: Cytochrome c biogenesis ATP-binding export protein CcmA (213 aa).

An ABC transporter domain is found at 8–213; the sequence is LQATALTCER…RDIDLGQWAA (206 aa). 40-47 contacts ATP; that stretch reads GPNGSGKT.

This sequence belongs to the ABC transporter superfamily. CcmA exporter (TC 3.A.1.107) family. The complex is composed of two ATP-binding proteins (CcmA) and two transmembrane proteins (CcmB).

The protein localises to the cell inner membrane. The catalysed reaction is heme b(in) + ATP + H2O = heme b(out) + ADP + phosphate + H(+). Part of the ABC transporter complex CcmAB involved in the biogenesis of c-type cytochromes; once thought to export heme, this seems not to be the case, but its exact role is uncertain. Responsible for energy coupling to the transport system. The chain is Cytochrome c biogenesis ATP-binding export protein CcmA from Pseudomonas savastanoi pv. phaseolicola (strain 1448A / Race 6) (Pseudomonas syringae pv. phaseolicola (strain 1448A / Race 6)).